The following is a 194-amino-acid chain: Yellow fluorescent protein (194 aa).

Lumazine-binding repeat units follow at residues 1 to 98 (MFKG…SGGH) and 99 to 194 (ILSA…NQCW). 179–183 (KVNVE) is a binding site for FMN.

In terms of assembly, homodimer. It depends on FMN as a cofactor.

Functionally, antenna protein that modulates the color of the bioluminescence emission of the luciferase. In the presence of YFP and only at temperatures below 20 degrees Celsius, luciferase exhibits a bimodal emission spectrum with a new peak at 545 nM (yellow), in addition to the one at 485 nM. This Aliivibrio fischeri (Vibrio fischeri) protein is Yellow fluorescent protein (luxY).